We begin with the raw amino-acid sequence, 160 residues long: Phosphopantetheine adenylyltransferase (160 aa).

Ser-8 contacts substrate. Residues 8–9 and His-16 each bind ATP; that span reads SF. 3 residues coordinate substrate: Lys-40, Thr-72, and Arg-86. Residues 87-89, Glu-97, and 122-128 each bind ATP; these read GLR and YSFLSSS.

This sequence belongs to the bacterial CoaD family. In terms of assembly, homohexamer. The cofactor is Mg(2+).

It localises to the cytoplasm. The catalysed reaction is (R)-4'-phosphopantetheine + ATP + H(+) = 3'-dephospho-CoA + diphosphate. It participates in cofactor biosynthesis; coenzyme A biosynthesis; CoA from (R)-pantothenate: step 4/5. Its function is as follows. Reversibly transfers an adenylyl group from ATP to 4'-phosphopantetheine, yielding dephospho-CoA (dPCoA) and pyrophosphate. The chain is Phosphopantetheine adenylyltransferase from Synechococcus sp. (strain CC9311).